A 170-amino-acid polypeptide reads, in one-letter code: Peptide deformylase-like (170 aa).

Glu-139 is an active-site residue.

This sequence belongs to the polypeptide deformylase family.

This is Peptide deformylase-like from Bradyrhizobium diazoefficiens (strain JCM 10833 / BCRC 13528 / IAM 13628 / NBRC 14792 / USDA 110).